Reading from the N-terminus, the 133-residue chain is MLHMHIASWALTIILYVIAFLHISKSQGPTPMFKPLQMALRVFMLLTLFSGFWLLIQEFMAASHGGGGNHMLLTLKMLCGIAVVALMEVSIAKRKKHEASHGLFWATIILIIITMSLGIILPWGPISSLFGIS.

A run of 4 helical transmembrane segments spans residues 1–21 (MLHMHIASWALTIILYVIAFL), 42–62 (VFMLLTLFSGFWLLIQEFMAA), 71–91 (MLLTLKMLCGIAVVALMEVSI), and 103–123 (LFWATIILIIITMSLGIILPW).

Belongs to the UPF0344 family.

Its subcellular location is the cell membrane. The chain is UPF0344 protein SH1980 from Staphylococcus haemolyticus (strain JCSC1435).